The chain runs to 114 residues: UPF0102 protein HPAG1_0809 (114 aa).

This sequence belongs to the UPF0102 family.

The chain is UPF0102 protein HPAG1_0809 from Helicobacter pylori (strain HPAG1).